A 250-amino-acid polypeptide reads, in one-letter code: 3-deoxy-manno-octulosonate cytidylyltransferase (250 aa).

Belongs to the KdsB family.

The protein resides in the cytoplasm. The enzyme catalyses 3-deoxy-alpha-D-manno-oct-2-ulosonate + CTP = CMP-3-deoxy-beta-D-manno-octulosonate + diphosphate. It functions in the pathway nucleotide-sugar biosynthesis; CMP-3-deoxy-D-manno-octulosonate biosynthesis; CMP-3-deoxy-D-manno-octulosonate from 3-deoxy-D-manno-octulosonate and CTP: step 1/1. The protein operates within bacterial outer membrane biogenesis; lipopolysaccharide biosynthesis. Its function is as follows. Activates KDO (a required 8-carbon sugar) for incorporation into bacterial lipopolysaccharide in Gram-negative bacteria. The chain is 3-deoxy-manno-octulosonate cytidylyltransferase from Azorhizobium caulinodans (strain ATCC 43989 / DSM 5975 / JCM 20966 / LMG 6465 / NBRC 14845 / NCIMB 13405 / ORS 571).